The following is a 481-amino-acid chain: Phosphoglucosamine mutase (481 aa).

Serine 128 acts as the Phosphoserine intermediate in catalysis. The Mg(2+) site is built by serine 128, aspartate 269, aspartate 271, and aspartate 273. Position 128 is a phosphoserine (serine 128).

Belongs to the phosphohexose mutase family. Requires Mg(2+) as cofactor. In terms of processing, activated by phosphorylation.

It catalyses the reaction alpha-D-glucosamine 1-phosphate = D-glucosamine 6-phosphate. Its function is as follows. Catalyzes the conversion of glucosamine-6-phosphate to glucosamine-1-phosphate. The polypeptide is Phosphoglucosamine mutase (Synechocystis sp. (strain ATCC 27184 / PCC 6803 / Kazusa)).